The following is a 360-amino-acid chain: Nicotinate-nucleotide--dimethylbenzimidazole phosphoribosyltransferase (360 aa).

Catalysis depends on Glu327, which acts as the Proton acceptor.

This sequence belongs to the CobT family.

The enzyme catalyses 5,6-dimethylbenzimidazole + nicotinate beta-D-ribonucleotide = alpha-ribazole 5'-phosphate + nicotinate + H(+). It functions in the pathway nucleoside biosynthesis; alpha-ribazole biosynthesis; alpha-ribazole from 5,6-dimethylbenzimidazole: step 1/2. Catalyzes the synthesis of alpha-ribazole-5'-phosphate from nicotinate mononucleotide (NAMN) and 5,6-dimethylbenzimidazole (DMB). The sequence is that of Nicotinate-nucleotide--dimethylbenzimidazole phosphoribosyltransferase from Shewanella baltica (strain OS155 / ATCC BAA-1091).